Here is a 179-residue protein sequence, read N- to C-terminus: Large ribosomal subunit protein uL5 (179 aa).

Belongs to the universal ribosomal protein uL5 family. In terms of assembly, part of the 50S ribosomal subunit; part of the 5S rRNA/L5/L18/L25 subcomplex. Contacts the 5S rRNA and the P site tRNA. Forms a bridge to the 30S subunit in the 70S ribosome.

This is one of the proteins that bind and probably mediate the attachment of the 5S RNA into the large ribosomal subunit, where it forms part of the central protuberance. In the 70S ribosome it contacts protein S13 of the 30S subunit (bridge B1b), connecting the 2 subunits; this bridge is implicated in subunit movement. Contacts the P site tRNA; the 5S rRNA and some of its associated proteins might help stabilize positioning of ribosome-bound tRNAs. The sequence is that of Large ribosomal subunit protein uL5 from Pseudomonas paraeruginosa (strain DSM 24068 / PA7) (Pseudomonas aeruginosa (strain PA7)).